We begin with the raw amino-acid sequence, 263 residues long: 3-methyl-2-oxobutanoate hydroxymethyltransferase (263 aa).

Asp-45 and Asp-84 together coordinate Mg(2+). Residues 45-46, Asp-84, and Lys-112 each bind 3-methyl-2-oxobutanoate; that span reads DS. Mg(2+) is bound at residue Glu-114. Glu-180 (proton acceptor) is an active-site residue.

This sequence belongs to the PanB family. Homodecamer; pentamer of dimers. Requires Mg(2+) as cofactor.

It is found in the cytoplasm. It catalyses the reaction 3-methyl-2-oxobutanoate + (6R)-5,10-methylene-5,6,7,8-tetrahydrofolate + H2O = 2-dehydropantoate + (6S)-5,6,7,8-tetrahydrofolate. The protein operates within cofactor biosynthesis; (R)-pantothenate biosynthesis; (R)-pantoate from 3-methyl-2-oxobutanoate: step 1/2. Functionally, catalyzes the reversible reaction in which hydroxymethyl group from 5,10-methylenetetrahydrofolate is transferred onto alpha-ketoisovalerate to form ketopantoate. In Enterobacter sp. (strain 638), this protein is 3-methyl-2-oxobutanoate hydroxymethyltransferase.